The primary structure comprises 475 residues: Sulfate adenylyltransferase subunit 1 (475 aa).

Residues 25-239 (KSLLRFLTCG…EVLETVEIQR (215 aa)) enclose the tr-type G domain. A G1 region spans residues 34-41 (GSVDDGKS). A GTP-binding site is contributed by 34-41 (GSVDDGKS). Positions 92–96 (GITID) are G2. Residues 113 to 116 (DTPG) form a G3 region. GTP-binding positions include 113-117 (DTPGH) and 168-171 (NKMD). The interval 168–171 (NKMD) is G4. The tract at residues 206–208 (SAL) is G5.

The protein belongs to the TRAFAC class translation factor GTPase superfamily. Classic translation factor GTPase family. CysN/NodQ subfamily. In terms of assembly, heterodimer composed of CysD, the smaller subunit, and CysN.

The catalysed reaction is sulfate + ATP + H(+) = adenosine 5'-phosphosulfate + diphosphate. Its pathway is sulfur metabolism; hydrogen sulfide biosynthesis; sulfite from sulfate: step 1/3. In terms of biological role, with CysD forms the ATP sulfurylase (ATPS) that catalyzes the adenylation of sulfate producing adenosine 5'-phosphosulfate (APS) and diphosphate, the first enzymatic step in sulfur assimilation pathway. APS synthesis involves the formation of a high-energy phosphoric-sulfuric acid anhydride bond driven by GTP hydrolysis by CysN coupled to ATP hydrolysis by CysD. This chain is Sulfate adenylyltransferase subunit 1, found in Escherichia fergusonii (strain ATCC 35469 / DSM 13698 / CCUG 18766 / IAM 14443 / JCM 21226 / LMG 7866 / NBRC 102419 / NCTC 12128 / CDC 0568-73).